A 340-amino-acid polypeptide reads, in one-letter code: MVGVLVNGYGSIGKRVADAVAKQDDMKVIGVTKTKPDFEARMAVTKGYKLFAAIPEKKHLFEEANIPIEGTIEDIIEDADIVVDGAPKKIGKANVENVYKKHNVKAIIQGGEKAKDAEDSFNSLWSYNRCYGKDYIRLVSCNTTGLCRTLYAIDSITDILKARVVLVRRAADPNDIKTGPINAIIPDPVTVPSHHGPDVVSVIPKLDGKIMTSAIIVPTTLMHMHSLMVETTGVTKDAVLDAIEKTPRIIKVKASEGIDSTAKIIEYSRDLGRLRYDLNEIAIWEESINVVDNEIYLMQAIHQESDVIPENIDCIRAMLEMEEDNIKSIEKTNRALGLLK.

NAD(+)-binding positions include 11–12 (SI) and glycine 111. 140–142 (SCN) lines the D-glyceraldehyde 3-phosphate pocket. The Nucleophile role is filled by cysteine 141. Residue arginine 169 participates in NAD(+) binding. 195-196 (HG) serves as a coordination point for D-glyceraldehyde 3-phosphate. Glutamine 303 is an NAD(+) binding site.

This sequence belongs to the glyceraldehyde-3-phosphate dehydrogenase family. In terms of assembly, homotetramer.

It is found in the cytoplasm. It carries out the reaction D-glyceraldehyde 3-phosphate + phosphate + NADP(+) = (2R)-3-phospho-glyceroyl phosphate + NADPH + H(+). It catalyses the reaction D-glyceraldehyde 3-phosphate + phosphate + NAD(+) = (2R)-3-phospho-glyceroyl phosphate + NADH + H(+). Its pathway is carbohydrate degradation; glycolysis; pyruvate from D-glyceraldehyde 3-phosphate: step 1/5. In Methanococcus vannielii (strain ATCC 35089 / DSM 1224 / JCM 13029 / OCM 148 / SB), this protein is Glyceraldehyde-3-phosphate dehydrogenase.